The chain runs to 697 residues: Zinc finger and BTB domain-containing protein 24 (697 aa).

Residues 10 to 133 (GQLVVHSDAH…AYTDFQNNHS (124 aa)) form the BTB domain. Over residues 131 to 142 (NHSSPKPTTLNT) the composition is skewed to polar residues. 2 disordered regions span residues 131 to 176 (NHSS…EEKS) and 209 to 254 (EQIA…SRYS). The a.T hook DNA-binding region spans 159–171 (KRKRGRPKKVNTL). Over residues 212-245 (AAKEKEESEPTCEPSREEEMPVEKDENYDPKTED) the composition is skewed to basic and acidic residues. 8 consecutive C2H2-type zinc fingers follow at residues 294–316 (ARCK…QRSH), 322–344 (FKCN…TRMH), 350–372 (YTCT…MSLH), 378–400 (FTCD…YRVH), 406–428 (PECK…LRTH), 434–456 (FTCE…IRIH), 462–484 (YSCG…CILH), and 490–512 (FSCP…LKIH). A disordered region spans residues 652–697 (QEQTEELHLATSTSDPAQHLQLTQEPGPPPPTHHVPQPTPLGQEQS). The span at 677–690 (PGPPPPTHHVPQPT) shows a compositional bias: pro residues.

It belongs to the krueppel C2H2-type zinc-finger protein family. Interacts with MN1. Widely expressed, with highest levels in naive B-cells.

It is found in the nucleus. May be involved in BMP2-induced transcription. This Homo sapiens (Human) protein is Zinc finger and BTB domain-containing protein 24 (ZBTB24).